The following is a 357-amino-acid chain: Alkanal monooxygenase alpha chain (357 aa).

Belongs to the bacterial luciferase oxidoreductase family. Heterodimer of an alpha and a beta chain.

The enzyme catalyses a long-chain fatty aldehyde + FMNH2 + O2 = a long-chain fatty acid + hnu + FMN + H2O + 2 H(+). Light-emitting reaction in luminous bacteria. This is Alkanal monooxygenase alpha chain (luxA) from Kryptophanaron alfredi symbiont.